Reading from the N-terminus, the 262-residue chain is Protein NEGATIVE GRAVITROPIC RESPONSE OF ROOTS (262 aa).

The disordered stretch occupies residues 1–40 (MKFFNWMQNKLGGKQENRKSNTSTSTTYAKPEPREEFSDW). The short motif at 43–49 (SLLAIGT) is the IGT motif element.

Belongs to the LAZY family.

Its function is as follows. Involved in the control of root gravitropism. The protein is Protein NEGATIVE GRAVITROPIC RESPONSE OF ROOTS of Medicago truncatula (Barrel medic).